Here is a 717-residue protein sequence, read N- to C-terminus: Cleavage stimulation factor subunit 3 (717 aa).

Ser2 carries the N-acetylserine modification. HAT repeat units lie at residues Gln45 to Lys77, Lys79 to Glu110, Ser117 to Gly152, Gln163 to Gly196, Lys221 to Ser261, Leu271 to Gln303, Leu319 to Ser352, Met354 to Arg387, and Asn458 to Asn494. The tract at residues Ala683–Val704 is disordered. Position 691 is a phosphoserine (Ser691).

In terms of assembly, homodimer. The CSTF complex is composed of CSTF1 (50 kDa subunit), CSTF2 (64 kDa subunit) and CSTF3 (77 kDa subunit). CSTF3 directly interacts with CSTF1 and CSTF2. Interacts with FIP1L1.

It localises to the nucleus. Its function is as follows. One of the multiple factors required for polyadenylation and 3'-end cleavage of mammalian pre-mRNAs. The polypeptide is Cleavage stimulation factor subunit 3 (Cstf3) (Mus musculus (Mouse)).